A 218-amino-acid chain; its full sequence is Putative pre-16S rRNA nuclease (218 aa).

The protein belongs to the YqgF nuclease family.

It is found in the cytoplasm. Could be a nuclease involved in processing of the 5'-end of pre-16S rRNA. The chain is Putative pre-16S rRNA nuclease from Thermotoga maritima (strain ATCC 43589 / DSM 3109 / JCM 10099 / NBRC 100826 / MSB8).